The chain runs to 581 residues: Arginine--tRNA ligase (581 aa).

The 'HIGH' region motif lies at 131–141; it reads ANPTGPLHVGH.

Belongs to the class-I aminoacyl-tRNA synthetase family. Monomer.

It is found in the cytoplasm. The catalysed reaction is tRNA(Arg) + L-arginine + ATP = L-arginyl-tRNA(Arg) + AMP + diphosphate. This is Arginine--tRNA ligase from Ruegeria pomeroyi (strain ATCC 700808 / DSM 15171 / DSS-3) (Silicibacter pomeroyi).